A 122-amino-acid polypeptide reads, in one-letter code: Large ribosomal subunit protein uL14 (122 aa).

This sequence belongs to the universal ribosomal protein uL14 family. In terms of assembly, part of the 50S ribosomal subunit. Forms a cluster with proteins L3 and L19. In the 70S ribosome, L14 and L19 interact and together make contacts with the 16S rRNA in bridges B5 and B8.

Functionally, binds to 23S rRNA. Forms part of two intersubunit bridges in the 70S ribosome. The sequence is that of Large ribosomal subunit protein uL14 from Orientia tsutsugamushi (strain Boryong) (Rickettsia tsutsugamushi).